The chain runs to 660 residues: ATPase-like fidgetin (660 aa).

2 disordered regions span residues 141–186 (KQIY…EDPF) and 209–334 (ALSS…ADSK). The span at 145-161 (SKHSPPSTSTSSIVSSS) shows a compositional bias: low complexity. S177 bears the Phosphoserine mark. Over residues 213 to 239 (DTGRSATMNSTTFPTAMKSQSTTKPTL) the composition is skewed to polar residues. Residues 240-255 (SNSVSSPSIQVSNNQN) are compositionally biased toward low complexity. A compositionally biased stretch (polar residues) spans 301-313 (LNSSHDTLGSSTR). Residues 314–333 (PSSADTAGSPATSPPATADS) are compositionally biased toward low complexity. Position 419–426 (419–426 (GPPGTGKT)) interacts with ATP.

Belongs to the AAA ATPase family.

It localises to the nucleus. The sequence is that of ATPase-like fidgetin (alf1) from Schizosaccharomyces pombe (strain 972 / ATCC 24843) (Fission yeast).